The primary structure comprises 693 residues: MLNPIVRKFQYGQHIVTLETGIMARQATAAVLTSMDDTTVFVTVVGQKKLQTEQKFFPMTVNYQERTYAAGRIPGGFFRREGRPSENEILIARLIDRPIRPLFPKRFFNEVQIIATVVSLNPQVNPDIVAIIGASAALSISGMPFLGPIGAARIGYINNQYILNPNVNEIKSSSLDLIISGTEESVLMVEAEANMLTEEQIINAINYGHEQQKIVIKNIEHFAKKVKIPVWEQCLYPVNDDLEKRIIEISEQEIVKAYNIFDKVIRLDVLDKIKSKAIEIIISEYSGIDEFEITSIISNIERKIVRNRVLKNRIRIDGRNKDEIRTLDVRTGVLPRVHGSALFTRGETQSLVSVTLGTSRDAQNLDELLGDKTDNFLFHYNFPPYAVGEIGMVGSPKRREIGHGKLAKRSILAVMPKLDLFPYTIRIVSEITESNGSSSMASVCGASLALMDAGVPISNAIAGIAMGLIKEGDDFVVLTDILGDEDHLGDMDFKISGSKKGITALQMDIKVKGITNEIMKLALYQAKNARIHILNIMKKSLNVPRKDISIFAPRIHTIKINPEKIKDVIGKGGSVIRMLTEETGTTIEIEDDGTVKISAVMQEKAKCAIQRIKEITAEVEVGSVYTGKVTRIVDFGAFVSIGIGKEGLVHISQIAHKRVDKVSDHLRLHQEIFVKVLEVDRQGRLRLSIKGAK.

Mg(2+) contacts are provided by Asp-486 and Asp-492. In terms of domain architecture, KH spans 553–612 (PRIHTIKINPEKIKDVIGKGGSVIRMLTEETGTTIEIEDDGTVKISAVMQEKAKCAIQRI). The S1 motif domain occupies 622 to 690 (GSVYTGKVTR…RQGRLRLSIK (69 aa)).

It belongs to the polyribonucleotide nucleotidyltransferase family. In terms of assembly, component of the RNA degradosome, which is a multiprotein complex involved in RNA processing and mRNA degradation. Mg(2+) is required as a cofactor.

The protein localises to the cytoplasm. It carries out the reaction RNA(n+1) + phosphate = RNA(n) + a ribonucleoside 5'-diphosphate. Involved in mRNA degradation. Catalyzes the phosphorolysis of single-stranded polyribonucleotides processively in the 3'- to 5'-direction. This is Polyribonucleotide nucleotidyltransferase from Buchnera aphidicola subsp. Baizongia pistaciae (strain Bp).